A 200-amino-acid polypeptide reads, in one-letter code: MIELFDVDYNLLPDNRSKELFSLRKKTFKDRLDWLVNCENNMEFDEYDNRHATYIFGTYQNHVICSLRFIETKYPNMISDGVFDTYFNDIKLPDGNYVEASRLFIDKARIQALQLHQAPISAMLFLSMINYARNCGYEGIYAIISHPMRIIFQRSGWHISVVKTGCSEKNKNIYLIYMPIDDANRNRLLARINQHATKMG.

The protein belongs to the autoinducer synthase family.

It carries out the reaction a fatty acyl-[ACP] + S-adenosyl-L-methionine = an N-acyl-L-homoserine lactone + S-methyl-5'-thioadenosine + holo-[ACP] + H(+). Its function is as follows. Required for the synthesis of BHL (N-butanoyl-L-homoserine lactone). The protein is Acyl-homoserine-lactone synthase (swrI) of Serratia liquefaciens.